The sequence spans 205 residues: Urease accessory protein UreG (205 aa).

Residue 14-21 (GPVGSGKT) participates in GTP binding.

It belongs to the SIMIBI class G3E GTPase family. UreG subfamily. As to quaternary structure, homodimer. UreD, UreF and UreG form a complex that acts as a GTP-hydrolysis-dependent molecular chaperone, activating the urease apoprotein by helping to assemble the nickel containing metallocenter of UreC. The UreE protein probably delivers the nickel.

It is found in the cytoplasm. In terms of biological role, facilitates the functional incorporation of the urease nickel metallocenter. This process requires GTP hydrolysis, probably effectuated by UreG. In Proteus mirabilis (strain HI4320), this protein is Urease accessory protein UreG.